A 66-amino-acid chain; its full sequence is Large ribosomal subunit protein eL29 (66 aa).

Residues 1–14 are compositionally biased toward polar residues; the sequence is MAKSKNSTNKNQIS. A disordered region spans residues 1 to 66; that stretch reads MAKSKNSTNK…KNLEKKVNKE (66 aa). The segment covering 15–31 has biased composition (basic residues); that stretch reads KSHRNGIKKPKDHRHIS. A compositionally biased stretch (basic and acidic residues) spans 47–66; that stretch reads IKNDPSIKKSKNLEKKVNKE.

This sequence belongs to the eukaryotic ribosomal protein eL29 family.

The protein localises to the cytoplasm. The chain is Large ribosomal subunit protein eL29 (RPL29) from Tetrahymena thermophila.